A 748-amino-acid polypeptide reads, in one-letter code: Catalase-peroxidase (748 aa).

Residues 92-238 (WHSAGTYRIG…LAAVQMGLIY (147 aa)) constitute a cross-link (tryptophyl-tyrosyl-methioninium (Trp-Tyr) (with M-264)). His93 functions as the Proton acceptor in the catalytic mechanism. Positions 238–264 (YVNPEGPDGNPDPIASARDIRDTFARM) form a cross-link, tryptophyl-tyrosyl-methioninium (Tyr-Met) (with W-92). His279 contacts heme b.

This sequence belongs to the peroxidase family. Peroxidase/catalase subfamily. In terms of assembly, homodimer or homotetramer. The cofactor is heme b. Formation of the three residue Trp-Tyr-Met cross-link is important for the catalase, but not the peroxidase activity of the enzyme.

It carries out the reaction H2O2 + AH2 = A + 2 H2O. The catalysed reaction is 2 H2O2 = O2 + 2 H2O. Functionally, bifunctional enzyme with both catalase and broad-spectrum peroxidase activity. In Xanthomonas euvesicatoria pv. vesicatoria (strain 85-10) (Xanthomonas campestris pv. vesicatoria), this protein is Catalase-peroxidase.